The sequence spans 107 residues: UPF0145 protein TT_C0892 (107 aa).

The protein belongs to the UPF0145 family.

This is UPF0145 protein TT_C0892 from Thermus thermophilus (strain ATCC BAA-163 / DSM 7039 / HB27).